The sequence spans 349 residues: ATP phosphoribosyltransferase regulatory subunit (349 aa).

The tract at residues 327–349 is disordered; sequence GRGRGVRPRRASARGGRARARPR. Positions 330–349 are enriched in basic residues; that stretch reads RGVRPRRASARGGRARARPR.

The protein belongs to the class-II aminoacyl-tRNA synthetase family. HisZ subfamily. Heteromultimer composed of HisG and HisZ subunits.

Its subcellular location is the cytoplasm. Its pathway is amino-acid biosynthesis; L-histidine biosynthesis; L-histidine from 5-phospho-alpha-D-ribose 1-diphosphate: step 1/9. Functionally, required for the first step of histidine biosynthesis. May allow the feedback regulation of ATP phosphoribosyltransferase activity by histidine. This is ATP phosphoribosyltransferase regulatory subunit from Anaeromyxobacter sp. (strain K).